An 813-amino-acid chain; its full sequence is Acyl-homoserine lactone acylase QuiP (813 aa).

The N-terminal stretch at 1 to 26 (MAAPAFPPFRLRFATAATLLGMLGLA) is a signal peptide. Residue S262 is the Nucleophile of the active site.

Belongs to the peptidase S45 family. As to quaternary structure, heterodimer of an alpha subunit and a beta subunit processed from the same precursor.

It is found in the periplasm. The catalysed reaction is an N-acyl-L-homoserine lactone + H2O = L-homoserine lactone + a carboxylate. Its function is as follows. Catalyzes the deacylation of acyl-homoserine lactone (AHL or acyl-HSL), releasing homoserine lactone (HSL) and the corresponding fatty acid. Possesses a specificity for the degradation of long-chain acyl-HSLs (side chains of seven or more carbons in length). The protein is Acyl-homoserine lactone acylase QuiP (quiP) of Pseudomonas putida (strain ATCC 47054 / DSM 6125 / CFBP 8728 / NCIMB 11950 / KT2440).